The chain runs to 300 residues: Acetylglutamate kinase (300 aa).

Residues 67-68 (GG), Arg89, and Asn194 contribute to the substrate site.

This sequence belongs to the acetylglutamate kinase family. ArgB subfamily.

The protein localises to the cytoplasm. It catalyses the reaction N-acetyl-L-glutamate + ATP = N-acetyl-L-glutamyl 5-phosphate + ADP. Its pathway is amino-acid biosynthesis; L-arginine biosynthesis; N(2)-acetyl-L-ornithine from L-glutamate: step 2/4. Its function is as follows. Catalyzes the ATP-dependent phosphorylation of N-acetyl-L-glutamate. The polypeptide is Acetylglutamate kinase (Saccharophagus degradans (strain 2-40 / ATCC 43961 / DSM 17024)).